The primary structure comprises 432 residues: Trigger factor (432 aa).

A PPIase FKBP-type domain is found at 161 to 246 (EDRVTIDFTG…LKKVEERELP (86 aa)).

The protein belongs to the FKBP-type PPIase family. Tig subfamily. As to quaternary structure, homodimer and monomer. In vivo most of the ribosomes are in complex with monomeric TF. Uncomplexed TF, however, is in a monomer-dimer equilibrium with approximately two thirds of TF existing in a dimeric state.

The protein resides in the cytoplasm. It carries out the reaction [protein]-peptidylproline (omega=180) = [protein]-peptidylproline (omega=0). Its function is as follows. Involved in protein export. Acts as a chaperone by maintaining the newly synthesized protein in an open conformation. Functions as a peptidyl-prolyl cis-trans isomerase. This Shigella boydii serotype 18 (strain CDC 3083-94 / BS512) protein is Trigger factor.